The sequence spans 85 residues: Putative membrane protein insertion efficiency factor (85 aa).

The protein belongs to the UPF0161 family.

The protein localises to the cell inner membrane. Could be involved in insertion of integral membrane proteins into the membrane. This Shewanella sediminis (strain HAW-EB3) protein is Putative membrane protein insertion efficiency factor.